Here is a 355-residue protein sequence, read N- to C-terminus: GTPase Obg (355 aa).

Positions 1-159 (MKLVDEAEIL…RLLKLELKLL (159 aa)) constitute an Obg domain. In terms of domain architecture, OBG-type G spans 160–342 (ADVGLLGFPN…IMKDVMAFFD (183 aa)). GTP contacts are provided by residues 166–173 (GFPNAGKS), 191–195 (FTTLY), 213–216 (DVPG), 292–295 (NKAD), and 323–325 (SAL). Positions 173 and 193 each coordinate Mg(2+).

This sequence belongs to the TRAFAC class OBG-HflX-like GTPase superfamily. OBG GTPase family. Monomer. Mg(2+) serves as cofactor.

It is found in the cytoplasm. Its function is as follows. An essential GTPase which binds GTP, GDP and possibly (p)ppGpp with moderate affinity, with high nucleotide exchange rates and a fairly low GTP hydrolysis rate. Plays a role in control of the cell cycle, stress response, ribosome biogenesis and in those bacteria that undergo differentiation, in morphogenesis control. This Xanthomonas euvesicatoria pv. vesicatoria (strain 85-10) (Xanthomonas campestris pv. vesicatoria) protein is GTPase Obg.